The following is a 232-amino-acid chain: Platelet-activating factor acetylhydrolase IB subunit alpha1 (232 aa).

The segment at 1–20 is disordered; that stretch reads MSGEGENPASKPTPVQDVQG. Ser-2 carries the N-acetylserine modification. Phosphoserine is present on Ser-2. Active-site residues include Ser-48, Asp-193, and His-196.

This sequence belongs to the 'GDSL' lipolytic enzyme family. Platelet-activating factor acetylhydrolase IB beta/gamma subunits subfamily. As to quaternary structure, forms a catalytic dimer which is either homodimer (alpha1/alpha1 homodimer) or heterodimer with PAFAH1B2 (alpha1/alpha2 heterodimer). Component of the cytosolic (PAF-AH (I)) heterotetrameric enzyme, which is composed of PAFAH1B1 (beta), PAFAH1B2 (alpha2) and PAFAH1B3 (alpha1) subunits. The catalytic activity of the enzyme resides in the alpha1 (PAFAH1B3) and alpha2 (PAFAH1B2) subunits, whereas the beta subunit (PAFAH1B1) has regulatory activity. Trimer formation is not essential for the catalytic activity. Interacts with VLDLR; this interaction may modulate the Reelin pathway.

The protein localises to the cytoplasm. The enzyme catalyses a 1-O-alkyl-2-acetyl-sn-glycero-3-phosphocholine + H2O = a 1-O-alkyl-sn-glycero-3-phosphocholine + acetate + H(+). The catalysed reaction is 1-O-hexadecyl-2-acetyl-sn-glycero-3-phosphocholine + H2O = 1-O-hexadecyl-sn-glycero-3-phosphocholine + acetate + H(+). It catalyses the reaction 1-O-hexadecyl-2-acetyl-sn-glycero-3-phosphate + H2O = 1-O-hexadecyl-sn-glycero-3-phosphate + acetate + H(+). Its activity is regulated as follows. Beta subunit (PAFAH1B1) inhibits the acetylhydrolase activity of the alpha1/alpha1 catalytic homodimer. Alpha1 catalytic subunit of the cytosolic type I platelet-activating factor (PAF) acetylhydrolase (PAF-AH (I)) heterotetrameric enzyme that catalyzes the hydrolyze of the acetyl group at the sn-2 position of PAF and its analogs and modulates the action of PAF. The activity and substrate specificity of PAF-AH (I) are affected by its subunit composition. Both alpha1/alpha1 homodimer (PAFAH1B3/PAFAH1B3 homodimer) and alpha1/alpha2 heterodimer(PAFAH1B3/PAFAH1B2 heterodimer) hydrolyze 1-O-alkyl-2-acetyl-sn-glycero-3-phosphoric acid (AAGPA) more efficiently than PAF, but they have little hydrolytic activity towards 1-O-alkyl-2-acetyl-sn-glycero-3-phosphorylethanolamine (AAGPE). Plays an important role during the development of brain. This is Platelet-activating factor acetylhydrolase IB subunit alpha1 from Mus musculus (Mouse).